The chain runs to 264 residues: Zinc import ATP-binding protein ZnuC (264 aa).

Positions 20–235 constitute an ABC transporter domain; sequence VQLKNIEVTF…PNFIHFFGDQ (216 aa). 52–59 lines the ATP pocket; the sequence is GPNGGGKS.

This sequence belongs to the ABC transporter superfamily. Zinc importer (TC 3.A.1.15.5) family. The complex is composed of two ATP-binding proteins (ZnuC), two transmembrane proteins (ZnuB) and a solute-binding protein (ZnuA).

Its subcellular location is the cell inner membrane. The enzyme catalyses Zn(2+)(out) + ATP(in) + H2O(in) = Zn(2+)(in) + ADP(in) + phosphate(in) + H(+)(in). Its function is as follows. Part of the ABC transporter complex ZnuABC involved in zinc import. Responsible for energy coupling to the transport system. This chain is Zinc import ATP-binding protein ZnuC, found in Haemophilus ducreyi (strain 35000HP / ATCC 700724).